A 480-amino-acid chain; its full sequence is Wax ester synthase/diacylglycerol acyltransferase 7 (480 aa).

Residues 1-193 are Cytoplasmic-facing; the sequence is MTYGEEEPVS…LRSIFTIGST (193 aa). The active-site Proton acceptor is His135. Residues 194–214 form a helical membrane-spanning segment; sequence MRLLWNTTIDMLLLLATVLFL. Residues 215–329 are Lumenal-facing; sequence KDTKTPLKAG…VKDSKCRWGN (115 aa). Residue Asn252 is glycosylated (N-linked (GlcNAc...) asparagine). A helical membrane pass occupies residues 330–350; sequence YFSFIFLPFTIGLQTDPLVYL. Over 351-365 the chain is Cytoplasmic; sequence KMSKSMMARKKHSYH. Residues 366 to 386 form a helical membrane-spanning segment; that stretch reads AALVYFIIKIVLKVFGAKAAA. At 387 to 480 the chain is on the lumenal side; that stretch reads ELFDRPVRNT…KASLCERGLL (94 aa). N-linked (GlcNAc...) asparagine glycosylation occurs at Asn395.

This sequence in the N-terminal section; belongs to the long-chain O-acyltransferase family. As to expression, expressed in roots, stems, leaves, flowers and siliques.

Its subcellular location is the cell membrane. It is found in the endoplasmic reticulum membrane. The protein localises to the golgi apparatus membrane. The catalysed reaction is an acyl-CoA + a 1,2-diacyl-sn-glycerol = a triacyl-sn-glycerol + CoA. It carries out the reaction a long chain fatty alcohol + a fatty acyl-CoA = a wax ester + CoA. Its pathway is glycerolipid metabolism; triacylglycerol biosynthesis. The protein operates within lipid metabolism. Its function is as follows. Bifunctional wax ester synthase/diacylglycerol acyltransferase that uses acyl-CoAs with 14, 16 and 18 carbons as substrates, preferably in combination with 16:0ol alcohol. Involved in cuticular wax biosynthesis. This Arabidopsis thaliana (Mouse-ear cress) protein is Wax ester synthase/diacylglycerol acyltransferase 7.